Here is a 413-residue protein sequence, read N- to C-terminus: Putative ankyrin repeat protein L92 (413 aa).

8 ANK repeats span residues 1–28, 32–67, 68–104, 105–134, 137–170, 174–208, 212–242, and 246–275; these read MCAC…DINC, DGMS…DVNL, TVDG…LFES, DDDD…NIEA, DGET…KTNI, DRKT…NINY, IGET…NPNI, and SGNT…SPEI.

In Acanthamoeba polyphaga mimivirus (APMV), this protein is Putative ankyrin repeat protein L92.